A 494-amino-acid polypeptide reads, in one-letter code: Transcription termination factor MTERF4, chloroplastic (494 aa).

The N-terminal 54 residues, 1 to 54, are a transit peptide targeting the chloroplast; it reads MMKSLLFSAHPTSLLLPAPRLRRLLRLRAASSASASAPPRADRRSPGTPSRRPS. 2 disordered regions span residues 32–61 and 457–494; these read SASASAPPRADRRSPGTPSRRPSSSLYARP and VEEMEREDSSDMNASVDEVESEEYEDSDYGDSDDEFVR. Over residues 46 to 56 the composition is skewed to low complexity; the sequence is PGTPSRRPSSS. Composition is skewed to acidic residues over residues 457-466 and 473-494; these read VEEMEREDSS and DEVESEEYEDSDYGDSDDEFVR.

This sequence belongs to the mTERF family.

Its subcellular location is the plastid. The protein localises to the chloroplast stroma. Its function is as follows. Transcription termination factor required for processing and steady-state levels of plastid transcripts. Required for splicing of the chloroplastic group II intron. Required for the accumulation of 16S and 23S ribosomes. The sequence is that of Transcription termination factor MTERF4, chloroplastic from Zea mays (Maize).